A 156-amino-acid chain; its full sequence is Small ribosomal subunit protein uS7 (156 aa).

The protein belongs to the universal ribosomal protein uS7 family. In terms of assembly, part of the 30S ribosomal subunit. Contacts proteins S9 and S11.

Its function is as follows. One of the primary rRNA binding proteins, it binds directly to 16S rRNA where it nucleates assembly of the head domain of the 30S subunit. Is located at the subunit interface close to the decoding center, probably blocks exit of the E-site tRNA. This Hyphomonas neptunium (strain ATCC 15444) protein is Small ribosomal subunit protein uS7.